The primary structure comprises 218 residues: uncharacterized protein (218 aa).

5 helical membrane passes run 28 to 48, 66 to 86, 92 to 112, 122 to 142, and 173 to 193; these read ILLFALSILGIGDGLIVLSGL, FDIGWSSFLISCAVMLVWKPL, LGTLLNIIVIALFLGITTKIL, MIFCLIGILLYGFGTALYLTC, and ISVCLLGFLLGGVVGLGTVLF.

The protein localises to the cell membrane. This is an uncharacterized protein from Haemophilus influenzae (strain ATCC 51907 / DSM 11121 / KW20 / Rd).